A 221-amino-acid polypeptide reads, in one-letter code: Thiamine-phosphate synthase (221 aa).

4-amino-2-methyl-5-(diphosphooxymethyl)pyrimidine-binding positions include 46 to 50 (QFREK) and N82. Mg(2+)-binding residues include D83 and D102. Position 121 (S121) interacts with 4-amino-2-methyl-5-(diphosphooxymethyl)pyrimidine. 2-[(2R,5Z)-2-carboxy-4-methylthiazol-5(2H)-ylidene]ethyl phosphate is bound at residue 148-150 (TQS). K151 serves as a coordination point for 4-amino-2-methyl-5-(diphosphooxymethyl)pyrimidine. Residues G180 and 200-201 (IS) contribute to the 2-[(2R,5Z)-2-carboxy-4-methylthiazol-5(2H)-ylidene]ethyl phosphate site.

Belongs to the thiamine-phosphate synthase family. Requires Mg(2+) as cofactor.

The enzyme catalyses 2-[(2R,5Z)-2-carboxy-4-methylthiazol-5(2H)-ylidene]ethyl phosphate + 4-amino-2-methyl-5-(diphosphooxymethyl)pyrimidine + 2 H(+) = thiamine phosphate + CO2 + diphosphate. The catalysed reaction is 2-(2-carboxy-4-methylthiazol-5-yl)ethyl phosphate + 4-amino-2-methyl-5-(diphosphooxymethyl)pyrimidine + 2 H(+) = thiamine phosphate + CO2 + diphosphate. It catalyses the reaction 4-methyl-5-(2-phosphooxyethyl)-thiazole + 4-amino-2-methyl-5-(diphosphooxymethyl)pyrimidine + H(+) = thiamine phosphate + diphosphate. It functions in the pathway cofactor biosynthesis; thiamine diphosphate biosynthesis; thiamine phosphate from 4-amino-2-methyl-5-diphosphomethylpyrimidine and 4-methyl-5-(2-phosphoethyl)-thiazole: step 1/1. Condenses 4-methyl-5-(beta-hydroxyethyl)thiazole monophosphate (THZ-P) and 2-methyl-4-amino-5-hydroxymethyl pyrimidine pyrophosphate (HMP-PP) to form thiamine monophosphate (TMP). The polypeptide is Thiamine-phosphate synthase (Pasteurella multocida (strain Pm70)).